The sequence spans 236 residues: Heme oxygenase (236 aa).

His17 provides a ligand contact to heme b.

The protein belongs to the heme oxygenase family.

Its subcellular location is the plastid. The protein resides in the chloroplast. The catalysed reaction is heme b + 3 reduced [NADPH--hemoprotein reductase] + 3 O2 = biliverdin IXalpha + CO + Fe(2+) + 3 oxidized [NADPH--hemoprotein reductase] + 3 H2O + H(+). Its function is as follows. Catalyzes the opening of the heme ring with the release of iron. Key enzyme in the synthesis of the chromophoric part of the photosynthetic antennae. This is Heme oxygenase (pbsA) from Porphyra purpurea (Red seaweed).